Consider the following 557-residue polypeptide: Anti-Muellerian hormone type-2 receptor (557 aa).

The first 17 residues, Met1–Val17, serve as a signal peptide directing secretion. Residues Ser18–Pro144 lie on the Extracellular side of the membrane. 2 disulfide bridges follow: Cys55-Cys79 and Cys92-Cys109. Asn66 carries N-linked (GlcNAc...) asparagine glycosylation. Asn119 carries an N-linked (GlcNAc...) asparagine glycan. The chain crosses the membrane as a helical span at residues Ile145 to Leu165. Topologically, residues Ala166 to Ser557 are cytoplasmic. Positions Leu201–Val511 constitute a Protein kinase domain. ATP-binding positions include Ile207–Val215 and Lys228. The active-site Proton acceptor is Asp331.

Belongs to the protein kinase superfamily. TKL Ser/Thr protein kinase family. TGFB receptor subfamily. In terms of assembly, interacts with type I receptor ACVR1. It depends on Mg(2+) as a cofactor. Mn(2+) serves as cofactor.

The protein resides in the membrane. The enzyme catalyses L-threonyl-[receptor-protein] + ATP = O-phospho-L-threonyl-[receptor-protein] + ADP + H(+). It catalyses the reaction L-seryl-[receptor-protein] + ATP = O-phospho-L-seryl-[receptor-protein] + ADP + H(+). Functionally, on ligand binding, forms a receptor complex consisting of two type II and two type I transmembrane serine/threonine kinases. Type II receptors phosphorylate and activate type I receptors which autophosphorylate, then bind and activate SMAD transcriptional regulators. Receptor for anti-Muellerian hormone. This is Anti-Muellerian hormone type-2 receptor (Amhr2) from Rattus norvegicus (Rat).